We begin with the raw amino-acid sequence, 883 residues long: 3-hydroxy-3-methylglutaryl-coenzyme A reductase (883 aa).

Residues 1 to 9 (MLSRLFRMH) are Cytoplasmic-facing. Residues 10-39 (GQFVASHPWEVIVGTVTLTICMMSMNMFTG) form a helical membrane-spanning segment. The Lumenal segment spans residues 40 to 56 (NDKICGWNYACPKFEED). A helical transmembrane segment spans residues 57 to 78 (VLSSDIIILTITRCIAILYIYF). At 79 to 89 (QFQNLRQLGSK) the chain is on the cytoplasmic side. The chain crosses the membrane as a helical span at residues 90 to 114 (YILGIAGLFTIFSSFVFSTVVIHFL). At 115-123 (DKELTGLNE) the chain is on the lumenal side. Residues 124 to 149 (ALPFFLLLIDLSKASALAKFALSSNS) form a helical membrane-spanning segment. Residues 150 to 159 (QDEVRDNIAR) lie on the Cytoplasmic side of the membrane. A helical transmembrane segment spans residues 160–187 (GMAILGPTFTLEALVECLVIGVGTMSGV). At 188-191 (RQLE) the chain is on the lumenal side. A helical membrane pass occupies residues 192–220 (IMCCFGCMSVLANYFAFMTFFPACVSLVL). The Cytoplasmic portion of the chain corresponds to 221–249 (ELSRESREGRPIWQLSQFASVLEEEEDNK). Residues 250-276 (PNPVTQRVKMIMSLGLVLVHAHSRWIS) form a helical membrane-spanning segment. Over 277–316 (EPSSQNSTSISDHEVTTMLDDMMPKRVEPSMPLWQFYLSR) the chain is Lumenal. The N-linked (GlcNAc...) asparagine glycan is linked to Asn282. A helical membrane pass occupies residues 317–341 (MVTMDVEQIITLGLALLLAVKYIFF). Over 342–883 (EQTETESTFS…LPGTCTKKAA (542 aa)) the chain is Cytoplasmic. Residues 373 to 396 (REPEQEKTVHVSTTEEASSKEETE) are disordered. Residues Glu554, Lys686, and Asp762 each act as charge relay system in the active site. The Proton donor role is filled by His861.

It belongs to the HMG-CoA reductase family. As to quaternary structure, homotetramer. Homodimer.

The protein localises to the endoplasmic reticulum membrane. It is found in the peroxisome membrane. The enzyme catalyses (R)-mevalonate + 2 NADP(+) + CoA = (3S)-3-hydroxy-3-methylglutaryl-CoA + 2 NADPH + 2 H(+). It participates in metabolic intermediate biosynthesis; (R)-mevalonate biosynthesis; (R)-mevalonate from acetyl-CoA: step 3/3. Functionally, catalyzes the conversion of (3S)-hydroxy-3-methylglutaryl-CoA (HMG-CoA) to mevalonic acid, the rate-limiting step in the synthesis of cholesterol and other isoprenoids, thus plays a critical role in cellular cholesterol homeostasis. This is 3-hydroxy-3-methylglutaryl-coenzyme A reductase (hmgcr) from Xenopus laevis (African clawed frog).